Reading from the N-terminus, the 921-residue chain is 2-oxoadipate dehydrogenase complex component E1 (921 aa).

Lysine 184 and lysine 189 each carry N6-succinyllysine. Residues 300–319 (GKTRGRQQSREDGDYSPNGS) form a disordered region. N6-succinyllysine occurs at positions 801 and 819.

The protein belongs to the alpha-ketoglutarate dehydrogenase family. In terms of assembly, the 2-oxoadipate dehydrogenase complex is composed of OADH (2-oxoadipate dehydrogenase; E1a), DLST (dihydrolipoamide succinyltransferase; E2) and DLD (dihydrolipoamide dehydrogenase; E3). E1a functional unit is a dimer. Thiamine diphosphate serves as cofactor.

Its subcellular location is the mitochondrion. It carries out the reaction N(6)-[(R)-lipoyl]-L-lysyl-[protein] + 2-oxoadipate + H(+) = N(6)-[(R)-S(8)-glutaryldihydrolipoyl]-L-lysyl-[protein] + CO2. Its pathway is amino-acid degradation. In terms of biological role, 2-oxoadipate dehydrogenase (E1a) component of the 2-oxoadipate dehydrogenase complex (OADHC). Participates in the first step, rate limiting for the overall conversion of 2-oxoadipate (alpha-ketoadipate) to glutaryl-CoA and CO(2) catalyzed by the whole OADHC. Catalyzes the irreversible decarboxylation of 2-oxoadipate via the thiamine diphosphate (ThDP) cofactor and subsequent transfer of the decarboxylated acyl intermediate on an oxidized dihydrolipoyl group that is covalently amidated to the E2 enzyme (dihydrolipoyllysine-residue succinyltransferase or DLST). Can catalyze the decarboxylation of 2-oxoglutarate in vitro, but at a much lower rate than 2-oxoadipate. Responsible for the last step of L-lysine, L-hydroxylysine and L-tryptophan catabolism with the common product being 2-oxoadipate. The protein is 2-oxoadipate dehydrogenase complex component E1 (Dhtkd1) of Mus musculus (Mouse).